A 652-amino-acid chain; its full sequence is Set1 complex component ash2 (652 aa).

Residues 1-32 are disordered; the sequence is MLAHGSNDYGVSLKGNKTGSSPSKASSLNWNE. Positions 15-32 are enriched in polar residues; it reads GNKTGSSPSKASSLNWNE. The PHD-type zinc finger occupies 40-94; it reads NTYCYCGKDRNLRFPDLQCSVCLNMFHLSCLSPPCTSMMGFSTNYQFVCKHCTED. Residues Cys43, Cys45, Cys58, Cys61, His66, Cys69, Cys88, and Cys91 each contribute to the Zn(2+) site. A disordered region spans residues 234–270; that stretch reads RLVETETPPPSSSKLKEDYKDSKREMKRSNTPWSNAS. Residues 247 to 261 show a composition bias toward basic and acidic residues; it reads KLKEDYKDSKREMKR. The B30.2/SPRY domain occupies 330–519; the sequence is EAAKDLPNVM…KHNRYIDLPY (190 aa).

The protein belongs to the cclA family. As to quaternary structure, component of the Set1 complex composed of ash2, sdc1, set1, shg1, spp1, swd1, swd2 and swd3. Component of the Lid2 complex composed of ash2, jmj3, lid2, sdc1 and snt2.

The protein localises to the nucleus. In terms of biological role, component of the COMPASS (Set1C) complex that specifically mono-, di- and trimethylates histone H3 to form H3K4me1/2/3, which subsequently plays a role in telomere length maintenance and transcription elongation regulation. Regulates MAPK pathway and sporulation through H3K4 methylation. In Schizosaccharomyces pombe (strain 972 / ATCC 24843) (Fission yeast), this protein is Set1 complex component ash2.